The primary structure comprises 333 residues: Holliday junction branch migration complex subunit RuvB (333 aa).

Positions 1-182 (MEERIVSAEA…FGVMARLEYY (182 aa)) are large ATPase domain (RuvB-L). Residues L21, R22, G63, K66, T67, T68, 129–131 (EDF), R172, Y182, and R219 each bind ATP. Mg(2+) is bound at residue T67. The interval 183-253 (KPEELAQIVE…RACSALEQLH (71 aa)) is small ATPAse domain (RuvB-S). A head domain (RuvB-H) region spans residues 256 to 333 (PLGLDHIDDK…AHYGVEKQNG (78 aa)). 2 residues coordinate DNA: R311 and R316.

This sequence belongs to the RuvB family. As to quaternary structure, homohexamer. Forms an RuvA(8)-RuvB(12)-Holliday junction (HJ) complex. HJ DNA is sandwiched between 2 RuvA tetramers; dsDNA enters through RuvA and exits via RuvB. An RuvB hexamer assembles on each DNA strand where it exits the tetramer. Each RuvB hexamer is contacted by two RuvA subunits (via domain III) on 2 adjacent RuvB subunits; this complex drives branch migration. In the full resolvosome a probable DNA-RuvA(4)-RuvB(12)-RuvC(2) complex forms which resolves the HJ.

It is found in the cytoplasm. It catalyses the reaction ATP + H2O = ADP + phosphate + H(+). The RuvA-RuvB-RuvC complex processes Holliday junction (HJ) DNA during genetic recombination and DNA repair, while the RuvA-RuvB complex plays an important role in the rescue of blocked DNA replication forks via replication fork reversal (RFR). RuvA specifically binds to HJ cruciform DNA, conferring on it an open structure. The RuvB hexamer acts as an ATP-dependent pump, pulling dsDNA into and through the RuvAB complex. RuvB forms 2 homohexamers on either side of HJ DNA bound by 1 or 2 RuvA tetramers; 4 subunits per hexamer contact DNA at a time. Coordinated motions by a converter formed by DNA-disengaged RuvB subunits stimulates ATP hydrolysis and nucleotide exchange. Immobilization of the converter enables RuvB to convert the ATP-contained energy into a lever motion, pulling 2 nucleotides of DNA out of the RuvA tetramer per ATP hydrolyzed, thus driving DNA branch migration. The RuvB motors rotate together with the DNA substrate, which together with the progressing nucleotide cycle form the mechanistic basis for DNA recombination by continuous HJ branch migration. Branch migration allows RuvC to scan DNA until it finds its consensus sequence, where it cleaves and resolves cruciform DNA. The chain is Holliday junction branch migration complex subunit RuvB from Shouchella clausii (strain KSM-K16) (Alkalihalobacillus clausii).